Consider the following 767-residue polypeptide: Protein hunchback (767 aa).

Disordered stretches follow at residues 30-51, 105-127, and 174-212; these read EPGH…PIPS, QQQY…HLMG, and EKLQ…SNSS. Polar residues predominate over residues 39-51; the sequence is SVASSPRQSPIPS. Over residues 105–117 the composition is skewed to low complexity; it reads QQQYQQHFQAAQQ. Positions 200–212 are enriched in basic and acidic residues; sequence EPEKEHDQMSNSS. 4 consecutive C2H2-type zinc fingers follow at residues 242 to 264, 271 to 293, 299 to 321, and 327 to 351; these read YKCK…TRTH, LQCP…IRKH, FQCD…RKSH, and YRCA…KYGH. 3 disordered regions span residues 357–424, 518–570, and 610–704; these read LDED…TSQL, QLQQ…QPQQ, and GVMT…APPS. The span at 386–397 shows a compositional bias: gly residues; sequence IASGGSGSGSGS. Positions 518 to 527 are enriched in low complexity; sequence QLQQQNQQQS. Positions 528–537 are enriched in acidic residues; it reads DNEEEEQDDE. Low complexity predominate over residues 661-704; that stretch reads ANTSASSTASSSGNSSNASSNSNGNSSSNSSSSGTNSAAAAPPS. 2 C2H2-type zinc fingers span residues 714 to 736 and 742 to 766; these read YECK…MGYH and FKCN…RNAH.

It belongs to the hunchback C2H2-type zinc-finger protein family.

The protein localises to the nucleus. Gap class segmentation protein that controls development of head structures. The sequence is that of Protein hunchback (hb) from Drosophila orena (Fruit fly).